The following is a 345-amino-acid chain: N-acetyl-gamma-glutamyl-phosphate reductase (345 aa).

The active site involves cysteine 149.

It belongs to the NAGSA dehydrogenase family. Type 1 subfamily.

It is found in the cytoplasm. The catalysed reaction is N-acetyl-L-glutamate 5-semialdehyde + phosphate + NADP(+) = N-acetyl-L-glutamyl 5-phosphate + NADPH + H(+). The protein operates within amino-acid biosynthesis; L-arginine biosynthesis; N(2)-acetyl-L-ornithine from L-glutamate: step 3/4. In terms of biological role, catalyzes the NADPH-dependent reduction of N-acetyl-5-glutamyl phosphate to yield N-acetyl-L-glutamate 5-semialdehyde. This is N-acetyl-gamma-glutamyl-phosphate reductase from Bacillus thuringiensis subsp. konkukian (strain 97-27).